A 102-amino-acid polypeptide reads, in one-letter code: Small ribosomal subunit protein eS24 (102 aa).

Belongs to the eukaryotic ribosomal protein eS24 family.

The protein is Small ribosomal subunit protein eS24 of Methanobrevibacter smithii (strain ATCC 35061 / DSM 861 / OCM 144 / PS).